We begin with the raw amino-acid sequence, 263 residues long: Shikimate dehydrogenase (NADP(+)) (263 aa).

Residues 21 to 23 (TLS) and threonine 67 contribute to the shikimate site. Residue lysine 71 is the Proton acceptor of the active site. Glutamate 83 is an NADP(+) binding site. Shikimate is bound by residues asparagine 92 and aspartate 103. NADP(+)-binding positions include 126–130 (GAGGA) and leucine 204. Shikimate is bound at residue tyrosine 206. Glycine 227 contacts NADP(+).

Belongs to the shikimate dehydrogenase family. Homodimer.

It carries out the reaction shikimate + NADP(+) = 3-dehydroshikimate + NADPH + H(+). It participates in metabolic intermediate biosynthesis; chorismate biosynthesis; chorismate from D-erythrose 4-phosphate and phosphoenolpyruvate: step 4/7. In terms of biological role, involved in the biosynthesis of the chorismate, which leads to the biosynthesis of aromatic amino acids. Catalyzes the reversible NADPH linked reduction of 3-dehydroshikimate (DHSA) to yield shikimate (SA). This chain is Shikimate dehydrogenase (NADP(+)), found in Sulfolobus acidocaldarius (strain ATCC 33909 / DSM 639 / JCM 8929 / NBRC 15157 / NCIMB 11770).